A 150-amino-acid chain; its full sequence is Transmembrane protein 35B (150 aa).

An N-terminal signal peptide occupies residues 1–21 (MSFRVGVLRVLLGVFFALTGA). Transmembrane regions (helical) follow at residues 62–82 (TAVG…PPVL), 84–104 (EISN…LVVL), and 111–131 (YVPA…HFLA).

This sequence belongs to the DoxX family.

Its subcellular location is the membrane. The sequence is that of Transmembrane protein 35B from Mus musculus (Mouse).